Reading from the N-terminus, the 157-residue chain is Small ribosomal subunit protein uS7 (157 aa).

It belongs to the universal ribosomal protein uS7 family. As to quaternary structure, part of the 30S ribosomal subunit. Contacts proteins S9 and S11.

Its function is as follows. One of the primary rRNA binding proteins, it binds directly to 16S rRNA where it nucleates assembly of the head domain of the 30S subunit. Is located at the subunit interface close to the decoding center, probably blocks exit of the E-site tRNA. The sequence is that of Small ribosomal subunit protein uS7 from Leptospira biflexa serovar Patoc (strain Patoc 1 / Ames).